The sequence spans 424 residues: UPF0229 protein Sde_0732 (424 aa).

The segment at 52 to 109 (IGIPSKDISEPVFHHDSGGVDTRVLPGNDQFHSGDRIQRPPSGQGGGGSGKGASDSGE) is disordered. The segment covering 58-69 (DISEPVFHHDSG) has biased composition (basic and acidic residues).

It belongs to the UPF0229 family.

The protein is UPF0229 protein Sde_0732 of Saccharophagus degradans (strain 2-40 / ATCC 43961 / DSM 17024).